Reading from the N-terminus, the 339-residue chain is Putative phosphate acyltransferase (339 aa).

Belongs to the PlsX family. In terms of assembly, homodimer. Probably interacts with PlsY.

Its subcellular location is the cytoplasm. It catalyses the reaction a fatty acyl-[ACP] + phosphate = an acyl phosphate + holo-[ACP]. It functions in the pathway lipid metabolism; phospholipid metabolism. Its function is as follows. Catalyzes the reversible formation of acyl-phosphate (acyl-PO(4)) from acyl-[acyl-carrier-protein] (acyl-ACP). This enzyme utilizes acyl-ACP as fatty acyl donor, but not acyl-CoA. The polypeptide is Putative phosphate acyltransferase (Clostridium perfringens (strain 13 / Type A)).